Reading from the N-terminus, the 511-residue chain is Putative CBL-interacting protein kinase 13 (511 aa).

Residues 25-279 (FEVGKLLGQG…AEGIMENEWF (255 aa)) form the Protein kinase domain. Residues 31–39 (LGQGNFAKV) and Lys-54 each bind ATP. Catalysis depends on Asp-147, which acts as the Proton acceptor. The activation loop stretch occupies residues 165-194 (DFGLSAVADGMRRDGLFHTFCGTPAYVAPE). Residues 307-340 (VDAPTSPPDTPRTVDSGDVGAAPTRPRKAGSLTS) form a disordered region. In terms of domain architecture, NAF spans 321–383 (DSGDVGAAPT…PGFDLSGLFD (63 aa)). The tract at residues 400-429 (KHTARFVSAAPVEVIVATLEAAAAAAGMAV) is PPI.

This sequence belongs to the protein kinase superfamily. CAMK Ser/Thr protein kinase family. SNF1 subfamily. Mn(2+) serves as cofactor.

The enzyme catalyses L-seryl-[protein] + ATP = O-phospho-L-seryl-[protein] + ADP + H(+). The catalysed reaction is L-threonyl-[protein] + ATP = O-phospho-L-threonyl-[protein] + ADP + H(+). In terms of biological role, CIPK serine-threonine protein kinases interact with CBL proteins. Binding of a CBL protein to the regulatory NAF domain of CIPK protein lead to the activation of the kinase in a calcium-dependent manner. In Oryza sativa subsp. japonica (Rice), this protein is Putative CBL-interacting protein kinase 13 (CIPK13).